A 492-amino-acid chain; its full sequence is 1-aminocyclopropane-1-carboxylate synthase 1 (492 aa).

N6-(pyridoxal phosphate)lysine is present on lysine 277.

This sequence belongs to the class-I pyridoxal-phosphate-dependent aminotransferase family. Homodimer. Pyridoxal 5'-phosphate is required as a cofactor.

The catalysed reaction is S-adenosyl-L-methionine = 1-aminocyclopropane-1-carboxylate + S-methyl-5'-thioadenosine + H(+). It participates in alkene biosynthesis; ethylene biosynthesis via S-adenosyl-L-methionine; ethylene from S-adenosyl-L-methionine: step 1/2. Functionally, catalyzes the formation of 1-aminocyclopropane-1-carboxylate, a direct precursor of ethylene in higher plants. This chain is 1-aminocyclopropane-1-carboxylate synthase 1 (ACS1), found in Prunus mume (Japanese apricot).